We begin with the raw amino-acid sequence, 189 residues long: Interferon alpha-1/13 (189 aa).

The N-terminal stretch at 1-23 is a signal peptide; sequence MASPFALLMVLVVLSCKSSCSLG. 2 disulfide bridges follow: Cys24/Cys122 and Cys52/Cys162.

This sequence belongs to the alpha/beta interferon family. Interacts with CR2.

It localises to the secreted. Functionally, produced by macrophages, IFN-alpha have antiviral activities. Interferon stimulates the production of two enzymes: a protein kinase and an oligoadenylate synthetase. The chain is Interferon alpha-1/13 (IFNA1) from Homo sapiens (Human).